The chain runs to 215 residues: uncharacterized protein (215 aa).

A run of 2 helical transmembrane segments spans residues 40–60 (VLFP…FCSL) and 72–92 (LIWF…VGYL).

Its subcellular location is the mitochondrion membrane. This is an uncharacterized protein from Arabidopsis thaliana (Mouse-ear cress).